The chain runs to 208 residues: Large ribosomal subunit protein uL3 (208 aa).

Q149 is subject to N5-methylglutamine.

This sequence belongs to the universal ribosomal protein uL3 family. In terms of assembly, part of the 50S ribosomal subunit. Forms a cluster with proteins L14 and L19. In terms of processing, methylated by PrmB.

Its function is as follows. One of the primary rRNA binding proteins, it binds directly near the 3'-end of the 23S rRNA, where it nucleates assembly of the 50S subunit. The sequence is that of Large ribosomal subunit protein uL3 from Haemophilus influenzae (strain PittGG).